Reading from the N-terminus, the 360-residue chain is Phospho-N-acetylmuramoyl-pentapeptide-transferase (360 aa).

10 helical membrane passes run 27-47, 73-93, 97-117, 145-165, 168-188, 199-219, 236-256, 263-283, 288-308, and 337-357; these read ILGV…VIVL, TMGG…WGDL, YVWV…VDDY, AFYL…VPLF, VAIP…VGTS, GLAI…AYLT, SGEL…FLWF, IFMG…IAVI, LVLF…ILQV, and KVIV…FATL.

Belongs to the glycosyltransferase 4 family. MraY subfamily. The cofactor is Mg(2+).

It is found in the cell inner membrane. It catalyses the reaction UDP-N-acetyl-alpha-D-muramoyl-L-alanyl-gamma-D-glutamyl-meso-2,6-diaminopimeloyl-D-alanyl-D-alanine + di-trans,octa-cis-undecaprenyl phosphate = di-trans,octa-cis-undecaprenyl diphospho-N-acetyl-alpha-D-muramoyl-L-alanyl-D-glutamyl-meso-2,6-diaminopimeloyl-D-alanyl-D-alanine + UMP. It participates in cell wall biogenesis; peptidoglycan biosynthesis. Catalyzes the initial step of the lipid cycle reactions in the biosynthesis of the cell wall peptidoglycan: transfers peptidoglycan precursor phospho-MurNAc-pentapeptide from UDP-MurNAc-pentapeptide onto the lipid carrier undecaprenyl phosphate, yielding undecaprenyl-pyrophosphoryl-MurNAc-pentapeptide, known as lipid I. The polypeptide is Phospho-N-acetylmuramoyl-pentapeptide-transferase (Marinomonas sp. (strain MWYL1)).